A 504-amino-acid polypeptide reads, in one-letter code: UDP-N-acetylmuramoylalanine--D-glutamate ligase (504 aa).

Residue 132-138 coordinates ATP; the sequence is GTNGKTT. Positions 284–310 are disordered; sequence AQDRDATDEPAPTRRRKSESTAPPDIG.

The protein belongs to the MurCDEF family.

The protein resides in the cytoplasm. The enzyme catalyses UDP-N-acetyl-alpha-D-muramoyl-L-alanine + D-glutamate + ATP = UDP-N-acetyl-alpha-D-muramoyl-L-alanyl-D-glutamate + ADP + phosphate + H(+). Its pathway is cell wall biogenesis; peptidoglycan biosynthesis. Cell wall formation. Catalyzes the addition of glutamate to the nucleotide precursor UDP-N-acetylmuramoyl-L-alanine (UMA). The polypeptide is UDP-N-acetylmuramoylalanine--D-glutamate ligase (Paraburkholderia phymatum (strain DSM 17167 / CIP 108236 / LMG 21445 / STM815) (Burkholderia phymatum)).